Here is a 677-residue protein sequence, read N- to C-terminus: UvrABC system protein B (677 aa).

The Helicase ATP-binding domain maps to alanine 27–glycine 192. Residue glycine 40–threonine 47 coordinates ATP. Residues tyrosine 93–isoleucine 116 carry the Beta-hairpin motif. In terms of domain architecture, Helicase C-terminal spans glutamine 432–leucine 594. One can recognise a UVR domain in the interval alanine 638–arginine 673.

It belongs to the UvrB family. In terms of assembly, forms a heterotetramer with UvrA during the search for lesions. Interacts with UvrC in an incision complex.

The protein resides in the cytoplasm. The UvrABC repair system catalyzes the recognition and processing of DNA lesions. A damage recognition complex composed of 2 UvrA and 2 UvrB subunits scans DNA for abnormalities. Upon binding of the UvrA(2)B(2) complex to a putative damaged site, the DNA wraps around one UvrB monomer. DNA wrap is dependent on ATP binding by UvrB and probably causes local melting of the DNA helix, facilitating insertion of UvrB beta-hairpin between the DNA strands. Then UvrB probes one DNA strand for the presence of a lesion. If a lesion is found the UvrA subunits dissociate and the UvrB-DNA preincision complex is formed. This complex is subsequently bound by UvrC and the second UvrB is released. If no lesion is found, the DNA wraps around the other UvrB subunit that will check the other stand for damage. The polypeptide is UvrABC system protein B (Nitratidesulfovibrio vulgaris (strain DP4) (Desulfovibrio vulgaris)).